A 568-amino-acid polypeptide reads, in one-letter code: Proline--tRNA ligase (568 aa).

Belongs to the class-II aminoacyl-tRNA synthetase family. ProS type 1 subfamily. As to quaternary structure, homodimer.

It localises to the cytoplasm. The catalysed reaction is tRNA(Pro) + L-proline + ATP = L-prolyl-tRNA(Pro) + AMP + diphosphate. Its function is as follows. Catalyzes the attachment of proline to tRNA(Pro) in a two-step reaction: proline is first activated by ATP to form Pro-AMP and then transferred to the acceptor end of tRNA(Pro). As ProRS can inadvertently accommodate and process non-cognate amino acids such as alanine and cysteine, to avoid such errors it has two additional distinct editing activities against alanine. One activity is designated as 'pretransfer' editing and involves the tRNA(Pro)-independent hydrolysis of activated Ala-AMP. The other activity is designated 'posttransfer' editing and involves deacylation of mischarged Ala-tRNA(Pro). The misacylated Cys-tRNA(Pro) is not edited by ProRS. In Listeria welshimeri serovar 6b (strain ATCC 35897 / DSM 20650 / CCUG 15529 / CIP 8149 / NCTC 11857 / SLCC 5334 / V8), this protein is Proline--tRNA ligase.